The sequence spans 166 residues: Protein-export protein SecB (166 aa).

The protein belongs to the SecB family. In terms of assembly, homotetramer, a dimer of dimers. One homotetramer interacts with 1 SecA dimer.

Its subcellular location is the cytoplasm. In terms of biological role, one of the proteins required for the normal export of preproteins out of the cell cytoplasm. It is a molecular chaperone that binds to a subset of precursor proteins, maintaining them in a translocation-competent state. It also specifically binds to its receptor SecA. In Sinorhizobium fredii (strain NBRC 101917 / NGR234), this protein is Protein-export protein SecB.